The primary structure comprises 198 residues: Recombination protein RecR (198 aa).

The segment at 56–71 adopts a C4-type zinc-finger fold; that stretch reads CTTCGNIDTHDPCAIC. One can recognise a Toprim domain in the interval 79–174; the sequence is RSLCVVEEVS…RLTQLAHGLP (96 aa).

This sequence belongs to the RecR family.

In terms of biological role, may play a role in DNA repair. It seems to be involved in an RecBC-independent recombinational process of DNA repair. It may act with RecF and RecO. The sequence is that of Recombination protein RecR from Sphingopyxis alaskensis (strain DSM 13593 / LMG 18877 / RB2256) (Sphingomonas alaskensis).